The following is a 173-amino-acid chain: MFIDKIKAKANNDEINVIIEIPMNIGPIKYEFDKESGAVFVDRFMQTTMSYPCNYGFIPHTLSNDGDPVDVLVVAHHPVVPGSVIKCRAVGVLMMEDESGLDEKIIAVPTSKLDITFDHIKELDDLCEMLKKRIVHFFEHYKDLEKGKWVKVTGWENKAKANALINEGIDRAS.

Positions 29, 43, and 55 each coordinate substrate. Mg(2+) contacts are provided by aspartate 65, aspartate 70, and aspartate 102. Residue tyrosine 141 coordinates substrate.

The protein belongs to the PPase family. In terms of assembly, homohexamer. The cofactor is Mg(2+).

It is found in the cytoplasm. It catalyses the reaction diphosphate + H2O = 2 phosphate + H(+). In terms of biological role, catalyzes the hydrolysis of inorganic pyrophosphate (PPi) forming two phosphate ions. The chain is Inorganic pyrophosphatase from Rickettsia felis (strain ATCC VR-1525 / URRWXCal2) (Rickettsia azadi).